The chain runs to 201 residues: Holliday junction resolvase RecU (201 aa).

Residues Thr-85, Asp-87, Glu-100, and Gln-119 each coordinate Mg(2+).

Belongs to the RecU family. Requires Mg(2+) as cofactor.

The protein localises to the cytoplasm. It catalyses the reaction Endonucleolytic cleavage at a junction such as a reciprocal single-stranded crossover between two homologous DNA duplexes (Holliday junction).. Functionally, endonuclease that resolves Holliday junction intermediates in genetic recombination. Cleaves mobile four-strand junctions by introducing symmetrical nicks in paired strands. Promotes annealing of linear ssDNA with homologous dsDNA. Required for DNA repair, homologous recombination and chromosome segregation. The sequence is that of Holliday junction resolvase RecU from Geobacillus thermodenitrificans (strain NG80-2).